The primary structure comprises 164 residues: 2-C-methyl-D-erythritol 2,4-cyclodiphosphate synthase (164 aa).

Asp8 and His10 together coordinate a divalent metal cation. Residues Asp8–His10 and His34–Ser35 each bind 4-CDP-2-C-methyl-D-erythritol 2-phosphate. Position 42 (His42) interacts with a divalent metal cation. 4-CDP-2-C-methyl-D-erythritol 2-phosphate is bound by residues Asp56–Gly58, Thr132–Glu135, Phe139, and Lys142.

Belongs to the IspF family. In terms of assembly, homotrimer. Requires a divalent metal cation as cofactor.

It catalyses the reaction 4-CDP-2-C-methyl-D-erythritol 2-phosphate = 2-C-methyl-D-erythritol 2,4-cyclic diphosphate + CMP. It functions in the pathway isoprenoid biosynthesis; isopentenyl diphosphate biosynthesis via DXP pathway; isopentenyl diphosphate from 1-deoxy-D-xylulose 5-phosphate: step 4/6. Functionally, involved in the biosynthesis of isopentenyl diphosphate (IPP) and dimethylallyl diphosphate (DMAPP), two major building blocks of isoprenoid compounds. Catalyzes the conversion of 4-diphosphocytidyl-2-C-methyl-D-erythritol 2-phosphate (CDP-ME2P) to 2-C-methyl-D-erythritol 2,4-cyclodiphosphate (ME-CPP) with a corresponding release of cytidine 5-monophosphate (CMP). In Clostridium kluyveri (strain NBRC 12016), this protein is 2-C-methyl-D-erythritol 2,4-cyclodiphosphate synthase.